A 647-amino-acid chain; its full sequence is Type II methyltransferase M.FokI (647 aa).

Short sequence motifs (adenine-specific methylase) lie at residues 218–221 (DPPY) and 548–551 (DPPY).

This sequence belongs to the N(4)/N(6)-methyltransferase family. Monomer.

It catalyses the reaction a 2'-deoxyadenosine in DNA + S-adenosyl-L-methionine = an N(6)-methyl-2'-deoxyadenosine in DNA + S-adenosyl-L-homocysteine + H(+). An alpha subtype methylase that recognizes the asymmetric double-stranded sequence 5'-GGATG-3', methylates A-3 of both strands, and protects the DNA from cleavage by the FokI endonuclease. This Planomicrobium okeanokoites (Planococcus okeanokoites) protein is Type II methyltransferase M.FokI.